Consider the following 100-residue polypeptide: Large ribosomal subunit protein eL36B (100 aa).

It belongs to the eukaryotic ribosomal protein eL36 family. In terms of assembly, component of the large ribosomal subunit (LSU). Mature yeast ribosomes consist of a small (40S) and a large (60S) subunit. The 40S small subunit contains 1 molecule of ribosomal RNA (18S rRNA) and 33 different proteins (encoded by 57 genes). The large 60S subunit contains 3 rRNA molecules (25S, 5.8S and 5S rRNA) and 46 different proteins (encoded by 81 genes).

Its subcellular location is the cytoplasm. Functionally, component of the ribosome, a large ribonucleoprotein complex responsible for the synthesis of proteins in the cell. The small ribosomal subunit (SSU) binds messenger RNAs (mRNAs) and translates the encoded message by selecting cognate aminoacyl-transfer RNA (tRNA) molecules. The large subunit (LSU) contains the ribosomal catalytic site termed the peptidyl transferase center (PTC), which catalyzes the formation of peptide bonds, thereby polymerizing the amino acids delivered by tRNAs into a polypeptide chain. The nascent polypeptides leave the ribosome through a tunnel in the LSU and interact with protein factors that function in enzymatic processing, targeting, and the membrane insertion of nascent chains at the exit of the ribosomal tunnel. The sequence is that of Large ribosomal subunit protein eL36B from Saccharomyces cerevisiae (strain ATCC 204508 / S288c) (Baker's yeast).